Here is a 304-residue protein sequence, read N- to C-terminus: Coenzyme PQQ synthesis protein B (304 aa).

Belongs to the PqqB family.

It functions in the pathway cofactor biosynthesis; pyrroloquinoline quinone biosynthesis. In terms of biological role, may be involved in the transport of PQQ or its precursor to the periplasm. The sequence is that of Coenzyme PQQ synthesis protein B from Azoarcus sp. (strain BH72).